We begin with the raw amino-acid sequence, 156 residues long: Baculoviral IAP repeat-containing protein 5.2 (156 aa).

The stretch at 30-100 (RLSTFANWPF…KHSPSCLFIA (71 aa)) is one BIR repeat. A Phosphothreonine; by CDK1 modification is found at threonine 46. Cysteine 69, cysteine 72, histidine 89, and cysteine 96 together coordinate Zn(2+).

This sequence belongs to the IAP family. Component of the CPC at least composed of survivin/birc5, incenp, cdca8/borealin and/or cdca9/dasra-A, and aurkb/aurora-B. Interacts directly with incenp (via N-terminus). Interacts with rxra; the interaction is stronger in the absence of 9-cis retinoic acids. In terms of processing, ubiquitination is required for centrosome-targeting.

Its subcellular location is the cytoplasm. The protein resides in the nucleus. It is found in the chromosome. It localises to the centromere. The protein localises to the cytoskeleton. Its subcellular location is the spindle. Functionally, component of the chromosomal passenger complex (CPC), a complex that acts as a key regulator of mitosis. The CPC complex has essential functions at the centromere in ensuring correct chromosome alignment and segregation and is required for chromatin-induced microtubule stabilization and spindle assembly. Does not appear to exhibit anti-apoptotic activity. Plays a role in increasing blood vessel size during development. This is Baculoviral IAP repeat-containing protein 5.2 (birc5.2) from Xenopus tropicalis (Western clawed frog).